The sequence spans 66 residues: UPF0337 protein BP1738 (66 aa).

Belongs to the UPF0337 (CsbD) family.

This chain is UPF0337 protein BP1738, found in Bordetella pertussis (strain Tohama I / ATCC BAA-589 / NCTC 13251).